A 537-amino-acid chain; its full sequence is CTP synthase (537 aa).

The segment at 1–268 (MSFKCIFLTG…STFITEKLGL (268 aa)) is amidoligase domain. Ser14 is a binding site for CTP. Ser14 is a binding site for UTP. 15–20 (SLGKGL) contacts ATP. Tyr55 contacts L-glutamine. Asp72 contributes to the ATP binding site. Residues Asp72 and Glu142 each contribute to the Mg(2+) site. CTP is bound by residues 149–151 (DIE), 188–193 (KTKPTQ), and Lys224. UTP is bound by residues 188 to 193 (KTKPTQ) and Lys224. The Glutamine amidotransferase type-1 domain occupies 294-533 (RLGLVGKYVQ…IEAALLHSRN (240 aa)). Gly353 contacts L-glutamine. Catalysis depends on Cys380, which acts as the Nucleophile; for glutamine hydrolysis. L-glutamine contacts are provided by residues 381–384 (LGMQ), Glu404, and Arg461. Active-site residues include His506 and Glu508.

The protein belongs to the CTP synthase family. As to quaternary structure, homotetramer.

The catalysed reaction is UTP + L-glutamine + ATP + H2O = CTP + L-glutamate + ADP + phosphate + 2 H(+). It catalyses the reaction L-glutamine + H2O = L-glutamate + NH4(+). It carries out the reaction UTP + NH4(+) + ATP = CTP + ADP + phosphate + 2 H(+). It functions in the pathway pyrimidine metabolism; CTP biosynthesis via de novo pathway; CTP from UDP: step 2/2. Its activity is regulated as follows. Allosterically activated by GTP, when glutamine is the substrate; GTP has no effect on the reaction when ammonia is the substrate. The allosteric effector GTP functions by stabilizing the protein conformation that binds the tetrahedral intermediate(s) formed during glutamine hydrolysis. Inhibited by the product CTP, via allosteric rather than competitive inhibition. In terms of biological role, catalyzes the ATP-dependent amination of UTP to CTP with either L-glutamine or ammonia as the source of nitrogen. Regulates intracellular CTP levels through interactions with the four ribonucleotide triphosphates. The protein is CTP synthase of Chlamydia abortus (strain DSM 27085 / S26/3) (Chlamydophila abortus).